The primary structure comprises 888 residues: Endochitinase A1 (888 aa).

A signal peptide spans 1-22 (MVSSKLSFVATAVAALAPLASA). The region spanning 29–338 (SNLAIYWGQG…DHMKDILLHC (310 aa)) is the GH18 domain. The active-site Proton donor is the E174. Disordered stretches follow at residues 338–631 (CDPS…TTTA), 743–799 (PVTE…VSTS), and 813–855 (PLIL…YTQE). A compositionally biased stretch (low complexity) spans 344-617 (VTSSSAIPSS…STDESSTTVG (274 aa)). An N-linked (GlcNAc...) asparagine glycan is attached at N622. A compositionally biased stretch (polar residues) spans 764–775 (EGSNPTQPSGAS). N-linked (GlcNAc...) asparagine glycosylation occurs at N780. Over residues 835–855 (PSGQNSGSSSHVPIPPSYTQE) the composition is skewed to polar residues. Residue G863 is the site of GPI-anchor amidated glycine attachment. Residues 864–888 (AASRVTGLGHGLVLTVLTLSAFFVL) constitute a propeptide, removed in mature form.

Belongs to the glycosyl hydrolase 18 family. Chitinase class III subfamily.

The protein localises to the cell membrane. It localises to the secreted. The protein resides in the cell wall. The enzyme catalyses Random endo-hydrolysis of N-acetyl-beta-D-glucosaminide (1-&gt;4)-beta-linkages in chitin and chitodextrins.. Its activity is regulated as follows. The cyclic peptide natural product argifin acts as a specific inhibitor. Its function is as follows. GPI-anchored chitinase involved in the degradation of chitin, a component of the cell walls of fungi and exoskeletal elements of some animals (including worms and arthropods). Required to reshape the cell wall at the sites where cell wall remodeling and/or cell wall maturation actively take place such as sites of conidia formation. The chain is Endochitinase A1 (chiA1) from Aspergillus fumigatus (strain ATCC MYA-4609 / CBS 101355 / FGSC A1100 / Af293) (Neosartorya fumigata).